A 107-amino-acid chain; its full sequence is Ubiquitin-related modifier 1 (107 aa).

The residue at position 107 (G107) is a 1-thioglycine. A Glycyl lysine isopeptide (Gly-Lys) (interchain with K-? in acceptor proteins) cross-link involves residue G107.

The protein belongs to the URM1 family. C-terminal thiocarboxylation occurs in 2 steps, it is first acyl-adenylated (-COAMP) via the hesA/moeB/thiF part of UBA4, then thiocarboxylated (-COSH) via the rhodanese domain of UBA4.

It localises to the cytoplasm. The protein operates within tRNA modification; 5-methoxycarbonylmethyl-2-thiouridine-tRNA biosynthesis. Acts as a sulfur carrier required for 2-thiolation of mcm(5)S(2)U at tRNA wobble positions of cytosolic tRNA(Lys), tRNA(Glu) and tRNA(Gln). Serves as sulfur donor in tRNA 2-thiolation reaction by being thiocarboxylated (-COSH) at its C-terminus by the MOCS3 homolog UBA4. The sulfur is then transferred to tRNA to form 2-thiolation of mcm(5)S(2)U. Prior mcm(5) tRNA modification by the elongator complex is required for 2-thiolation. Also acts as a ubiquitin-like protein (UBL) that is covalently conjugated via an isopeptide bond to lysine residues of target proteins such as AHP1. The thiocarboxylated form serves as substrate for conjugation and oxidative stress specifically induces the formation of UBL-protein conjugates. The protein is Ubiquitin-related modifier 1 of Mycosarcoma maydis (Corn smut fungus).